The primary structure comprises 940 residues: MDKIEVRGARTHNLKNINLTIPRDKLIVITGLSGSGKSSLAFDTLYAEGQRRYVESLSAYARQFLSLMEKPDVDHIEGLSPAISIEQKSTSHNPRSTVGTITEVYDYLRLLYARVGEPRCPDHKVPLAAQTISQMVDKVLELPEGAKMMLLAPIVKERKGEHVKTLENLAAQGFIRARIDGETCDLTDPPTLELHKKHTIEVVVDRFKVRGDLQQRLAESFETALELSGGIAVIAPMEGDGEEIVFSANFACPHCGYSMQELEPRLFSFNNPAGACGTCDGLGVQQYFDPERVIQDANLSLAQGAIRGWDQKNYYYFQMLTSLAEHYDFDLHAPFNSLSKRIQEVILKGSGRTEIEFKYINDRGDIRLKRHPFEGILNTLERRYRDTESNSVREELVKYISTKPCTSCGGTRLRLEARNVFINDTTLPQIVELSIADALTFFATLKLEGQRAQIAEKVMKEINDRLQFLVNVGLNYLNLSRSAETLSGGEAQRIRLASQIGAGLVGVMYVLDEPSIGLHQRDNERLLKTLTHLRDLGNTVLVVEHDEDAIRCADHVIDIGPGAGVHGGQVVAEGTMAEILANPDSLTGQYLSGAKQIIVPTQRTPRDKNKTVELIGASGNNLKEVNLSVPVGLFSCITGVSGSGKSTLINDTFFKIAHTQLNGATTAQPAPYKSIKGLEHFDKVIDIDQSPIGRTPRSNPATYTGIFTPIRELFSGTQESRSRGYKPGRFSFNVRGGRCEACQGDGVIKVEMHFLPDVYVPCDVCKGKRYNRETLEVHYKGKSIDEVLEMTVEDAHEFFAPVPVIARKLQTLMDVGLSYIRLGQAATTLSGGEAQRVKLARELSKRDTGKTLYILDEPTTGLHFHDIQQLLTVLHRLRDHGNTVVVIEHNLDVIKTADWIIDLGPEGGQGGGEIIAQGTPEDVAQIEGSHTARFLKPMLK.

31 to 38 (GLSGSGKS) serves as a coordination point for ATP. The C4-type zinc finger occupies 252–279 (CPHCGYSMQELEPRLFSFNNPAGACGTC). 2 consecutive ABC transporter domains span residues 309–586 (WDQK…PDSL) and 606–936 (RDKN…RFLK). 639–646 (GVSGSGKS) contacts ATP. The segment at 739 to 765 (CEACQGDGVIKVEMHFLPDVYVPCDVC) adopts a C4-type zinc-finger fold.

Belongs to the ABC transporter superfamily. UvrA family. Forms a heterotetramer with UvrB during the search for lesions.

The protein resides in the cytoplasm. Functionally, the UvrABC repair system catalyzes the recognition and processing of DNA lesions. UvrA is an ATPase and a DNA-binding protein. A damage recognition complex composed of 2 UvrA and 2 UvrB subunits scans DNA for abnormalities. When the presence of a lesion has been verified by UvrB, the UvrA molecules dissociate. This Vibrio vulnificus (strain YJ016) protein is UvrABC system protein A.